A 391-amino-acid chain; its full sequence is MRKLFTSESVTEGHPDKICDQISDAVLDAILDKDPNGRVACETAVTTGMVMVMGEISTKCYVDIPKLVRETIRGIGYDRAKYGFDCETCSVITSIDEQSVDIAMGVDEALESKKGEMDKLDAVGAGDQGMMFGFATNETKEYMPMPIEMAHKLSRRLSEVRKNGTLPYLRPDGKTQVTVEYENGKPVRIDAIVISTQHGPEIYLEQIEKDIKEHVIKVIVPSELLDENTKYFINPTGRFVVGGPQGDSGLTGRKIIVDTYGGYGRHGGGAFSGKDPTKVDRSAAYAARWVAKNLVAAGVADKLEIQLAYAIGVAKPVSISVDTFGTGKMTDEEIVSIVNKVFDLRPGAIIRDLDLRRPIYKQVAAYGHFGRTDIDVPWERLDKVEEIKKHI.

ATP is bound at residue His14. Residue Asp16 coordinates Mg(2+). A K(+)-binding site is contributed by Glu42. Positions 55 and 98 each coordinate L-methionine. The tract at residues 98-108 (QSVDIAMGVDE) is flexible loop. Residues 172–174 (DGK), 238–239 (RF), Asp247, 253–254 (RK), Ala270, and Lys274 each bind ATP. L-methionine is bound at residue Asp247. Lys278 is an L-methionine binding site.

This sequence belongs to the AdoMet synthase family. Homotetramer; dimer of dimers. Mg(2+) serves as cofactor. The cofactor is K(+).

The protein resides in the cytoplasm. The catalysed reaction is L-methionine + ATP + H2O = S-adenosyl-L-methionine + phosphate + diphosphate. The protein operates within amino-acid biosynthesis; S-adenosyl-L-methionine biosynthesis; S-adenosyl-L-methionine from L-methionine: step 1/1. In terms of biological role, catalyzes the formation of S-adenosylmethionine (AdoMet) from methionine and ATP. The overall synthetic reaction is composed of two sequential steps, AdoMet formation and the subsequent tripolyphosphate hydrolysis which occurs prior to release of AdoMet from the enzyme. The polypeptide is S-adenosylmethionine synthase (Clostridium botulinum (strain Kyoto / Type A2)).